Reading from the N-terminus, the 208-residue chain is Thymidylate kinase (208 aa).

11-18 (GGEGVGKS) provides a ligand contact to ATP.

It belongs to the thymidylate kinase family.

It catalyses the reaction dTMP + ATP = dTDP + ADP. Functionally, phosphorylation of dTMP to form dTDP in both de novo and salvage pathways of dTTP synthesis. This chain is Thymidylate kinase, found in Methylococcus capsulatus (strain ATCC 33009 / NCIMB 11132 / Bath).